The following is a 269-amino-acid chain: Photosystem I assembly factor PSA3, chloroplastic (269 aa).

Residues 1–37 (MGALPVAHSLALTAAFLPCRRPAAHGRCRRRRYRAVV) constitute a chloroplast transit peptide.

The protein localises to the plastid. Its subcellular location is the chloroplast thylakoid membrane. Its function is as follows. Nuclear genome-encoded factor required for the accumulation of photosystem I (PSI). Functions as a PSI biogenesis factor. Cooperates with PYG7 to promote the stable assembly of PSI in the thylakoid membrane. May target primarily the PsaC subunit. Does not seem to be required for the expression of chloroplast genes encoding PSI subunits. This chain is Photosystem I assembly factor PSA3, chloroplastic, found in Zea mays (Maize).